The chain runs to 138 residues: Large ribosomal subunit protein uL16 (138 aa).

The span at 1–15 (MLSPKKVKYRKKQRG) shows a compositional bias: basic residues. The segment at 1–21 (MLSPKKVKYRKKQRGRLSGEA) is disordered.

The protein belongs to the universal ribosomal protein uL16 family. In terms of assembly, part of the 50S ribosomal subunit.

Functionally, binds 23S rRNA and is also seen to make contacts with the A and possibly P site tRNAs. The polypeptide is Large ribosomal subunit protein uL16 (Borrelia garinii subsp. bavariensis (strain ATCC BAA-2496 / DSM 23469 / PBi) (Borreliella bavariensis)).